A 319-amino-acid chain; its full sequence is Cytochrome c biogenesis protein CcsA (319 aa).

The next 7 helical transmembrane spans lie at 9–29 (ILTH…LITL), 44–64 (GVIG…AYSG), 71–91 (LYES…FPYF), 143–163 (MVLG…LLVI), 225–245 (IISL…VWAN), 259–273 (TWAF…IYLH), and 286–306 (AIVA…VNLL).

It belongs to the CcmF/CycK/Ccl1/NrfE/CcsA family. As to quaternary structure, may interact with Ccs1.

It localises to the plastid. It is found in the chloroplast thylakoid membrane. In terms of biological role, required during biogenesis of c-type cytochromes (cytochrome c6 and cytochrome f) at the step of heme attachment. The sequence is that of Cytochrome c biogenesis protein CcsA from Oenothera biennis (German evening primrose).